A 479-amino-acid polypeptide reads, in one-letter code: Phosphoglycerate kinase, glycosomal (479 aa).

(2R)-3-phosphoglycerate is bound by residues valine 23, aspartate 24, phenylalanine 25, asparagine 26, arginine 39, serine 61, histidine 62, glycine 64, arginine 65, arginine 132, histidine 168, and arginine 169. Positions 214 and 215 each coordinate ADP. Glycine 214 serves as a coordination point for CDP. 2 residues coordinate AMP: alanine 215 and lysine 216. An ATP-binding site is contributed by alanine 215. Alanine 215 is a binding site for Mg(2+). Position 216 (lysine 216) interacts with (2R)-3-phosphoglycerate. Aspartate 219 serves as a coordination point for CDP. Aspartate 219 serves as a coordination point for Mg(2+). ADP-binding residues include lysine 220 and glycine 238. Lysine 220 is a binding site for AMP. Lysine 220 lines the ATP pocket. Glycine 238 contacts CDP. Positions 239 and 311 each coordinate AMP. Positions 239 and 311 each coordinate ATP. ADP contacts are provided by alanine 311 and asparagine 335. Residues glycine 336 and phenylalanine 341 each coordinate CDP. ADP contacts are provided by phenylalanine 341, glutamate 342, aspartate 374, and serine 375. Glutamate 342 serves as a coordination point for AMP. The ATP site is built by glutamate 342, aspartate 374, and serine 375. Aspartate 374 is a binding site for Mg(2+).

Belongs to the phosphoglycerate kinase family. In terms of assembly, monomer. It depends on Mg(2+) as a cofactor.

The protein resides in the glycosome. It catalyses the reaction (2R)-3-phosphoglycerate + ATP = (2R)-3-phospho-glyceroyl phosphate + ADP. It functions in the pathway carbohydrate degradation; glycolysis; pyruvate from D-glyceraldehyde 3-phosphate: step 2/5. The chain is Phosphoglycerate kinase, glycosomal (PGKC) from Leishmania major.